Here is a 187-residue protein sequence, read N- to C-terminus: NADH-quinone oxidoreductase subunit B (187 aa).

[4Fe-4S] cluster contacts are provided by Cys-51, Cys-52, Cys-117, and Cys-149.

This sequence belongs to the complex I 20 kDa subunit family. As to quaternary structure, NDH-1 is composed of 14 different subunits. Subunits NuoB, C, D, E, F, and G constitute the peripheral sector of the complex. Requires [4Fe-4S] cluster as cofactor.

It is found in the cell inner membrane. The enzyme catalyses a quinone + NADH + 5 H(+)(in) = a quinol + NAD(+) + 4 H(+)(out). In terms of biological role, NDH-1 shuttles electrons from NADH, via FMN and iron-sulfur (Fe-S) centers, to quinones in the respiratory chain. The immediate electron acceptor for the enzyme in this species is believed to be ubiquinone. Couples the redox reaction to proton translocation (for every two electrons transferred, four hydrogen ions are translocated across the cytoplasmic membrane), and thus conserves the redox energy in a proton gradient. In Nitratidesulfovibrio vulgaris (strain DSM 19637 / Miyazaki F) (Desulfovibrio vulgaris), this protein is NADH-quinone oxidoreductase subunit B.